Consider the following 226-residue polypeptide: Small ribosomal subunit protein uS3 (226 aa).

The region spanning 39-107 (IRKFIKNKLY…NILINITEIK (69 aa)) is the KH type-2 domain.

The protein belongs to the universal ribosomal protein uS3 family. In terms of assembly, part of the 30S ribosomal subunit. Forms a tight complex with proteins S10 and S14.

Binds the lower part of the 30S subunit head. Binds mRNA in the 70S ribosome, positioning it for translation. This Acetivibrio thermocellus (strain ATCC 27405 / DSM 1237 / JCM 9322 / NBRC 103400 / NCIMB 10682 / NRRL B-4536 / VPI 7372) (Clostridium thermocellum) protein is Small ribosomal subunit protein uS3.